A 532-amino-acid polypeptide reads, in one-letter code: Probable cyclic di-GMP phosphodiesterase PdeD (532 aa).

Transmembrane regions (helical) follow at residues 16–36 (MIVC…VRFI) and 245–265 (LPLA…ATAY). One can recognise an EAL domain in the interval 266 to 515 (RMSFSREINL…DFPKWLAGSQ (250 aa)).

It is found in the cell membrane. The enzyme catalyses 3',3'-c-di-GMP + H2O = 5'-phosphoguanylyl(3'-&gt;5')guanosine + H(+). In terms of biological role, phosphodiesterase (PDE) that catalyzes the hydrolysis of cyclic-di-GMP (c-di-GMP) to 5'-pGpG. May serve as a negative regulator of cellulose synthesis (as has been suggested for S.typhimurium); overexpression inhibits cell aggregation in strains able to produce adhesive curli fimbriae. Cyclic-di-GMP is a second messenger which controls cell surface-associated traits in bacteria. The sequence is that of Probable cyclic di-GMP phosphodiesterase PdeD from Escherichia coli (strain K12).